The primary structure comprises 261 residues: uncharacterized protein (261 aa).

Residue glutamate 46 is part of the active site.

Belongs to the PhzF family.

This is an uncharacterized protein from Pseudomonas aeruginosa (strain ATCC 15692 / DSM 22644 / CIP 104116 / JCM 14847 / LMG 12228 / 1C / PRS 101 / PAO1).